The sequence spans 353 residues: Probable protease SohB (353 aa).

The helical transmembrane segment at 11–31 (IFILEILTILLLILAVVGLII) threads the bilayer. The span at 70 to 84 (QKQRTKAEKKAEKQN) shows a compositional bias: basic and acidic residues. A disordered region spans residues 70 to 93 (QKQRTKAEKKAEKQNAKKRKEKLK). The active-site Nucleophile is the Ser-181. The active-site Proton donor/acceptor is Lys-233.

The protein belongs to the peptidase S49 family.

Its subcellular location is the cell membrane. Functionally, possible protease. The sequence is that of Probable protease SohB (sohB) from Haemophilus influenzae (strain ATCC 51907 / DSM 11121 / KW20 / Rd).